Here is a 282-residue protein sequence, read N- to C-terminus: MSKEVSEEPEHVRPKDYTDPPPAPLFDVGELRLWSFYRALIAEFIATLLFLYITVATVIGYKVQSSADQCGGVGTLGIAWAFGGMIFILVYCTAGISGGHINPAVTFGLLLARKVSVIRAVMYIVAQCLGGIVGVGIVKGIMKHQYNANGGGANMVASGYSTGTALGAEIIGTFVLVYTVFSATDPKRNARDSHVPVLAPLPIGFAVFMVHLATIPITGTGINPARSIGAAVIYNQKKAWDDHWIFWAGPFIGALAAAAYHQYILRAAAIKALGSFRSNPSN.

2 helical membrane-spanning segments follow: residues 39–59 (ALIA…ATVI) and 76–96 (LGIA…TAGI). An NPA 1 motif is present at residues 102-104 (NPA). The next 3 membrane-spanning stretches (helical) occupy residues 121–141 (VMYI…VKGI), 163–183 (GTAL…VFSA), and 197–217 (VLAP…TIPI). Positions 223–225 (NPA) match the NPA 2 motif. The helical transmembrane segment at 245–265 (IFWAGPFIGALAAAAYHQYIL) threads the bilayer.

This sequence belongs to the MIP/aquaporin (TC 1.A.8) family. PIP (TC 1.A.8.11) subfamily. As to expression, expressed in roots and leaves.

It localises to the cell membrane. Functionally, aquaporins facilitate the transport of water and small neutral solutes across cell membranes. This Oryza sativa subsp. japonica (Rice) protein is Probable aquaporin PIP2-6 (PIP2-6).